The chain runs to 47 residues: Type II secretion system protein N (47 aa).

Belongs to the GSP N family.

It localises to the cell inner membrane. Functionally, involved in a type II secretion system (T2SS, formerly general secretion pathway, GSP) for the export of proteins. The polypeptide is Type II secretion system protein N (exeN) (Aeromonas salmonicida).